A 303-amino-acid polypeptide reads, in one-letter code: Haloalkane dehalogenase (303 aa).

The AB hydrolase-1 domain maps to 48 to 192 (PVLLLHGEPS…GTVTKLSQAV (145 aa)). The Nucleophile role is filled by Asp123. Asp250 functions as the Proton donor in the catalytic mechanism. His280 functions as the Proton acceptor in the catalytic mechanism.

The protein belongs to the haloalkane dehalogenase family. Type 1 subfamily. Monomer.

The catalysed reaction is 1-haloalkane + H2O = a halide anion + a primary alcohol + H(+). Functionally, catalyzes hydrolytic cleavage of carbon-halogen bonds in halogenated aliphatic compounds, leading to the formation of the corresponding primary alcohols, halide ions and protons. The protein is Haloalkane dehalogenase of Psychrobacter cryohalolentis (strain ATCC BAA-1226 / DSM 17306 / VKM B-2378 / K5).